The following is a 59-amino-acid chain: UPF0509 protein YciZ (59 aa).

This sequence belongs to the UPF0509 family.

This chain is UPF0509 protein YciZ, found in Salmonella agona (strain SL483).